Consider the following 190-residue polypeptide: Protein GrpE (190 aa).

The span at 1–31 shows a compositional bias: polar residues; the sequence is MTETPNTSSEEIQTSEPSSDNELQTLQQENA. A disordered region spans residues 1 to 34; the sequence is MTETPNTSSEEIQTSEPSSDNELQTLQQENANLK.

Belongs to the GrpE family. As to quaternary structure, homodimer.

Its subcellular location is the cytoplasm. Participates actively in the response to hyperosmotic and heat shock by preventing the aggregation of stress-denatured proteins, in association with DnaK and GrpE. It is the nucleotide exchange factor for DnaK and may function as a thermosensor. Unfolded proteins bind initially to DnaJ; upon interaction with the DnaJ-bound protein, DnaK hydrolyzes its bound ATP, resulting in the formation of a stable complex. GrpE releases ADP from DnaK; ATP binding to DnaK triggers the release of the substrate protein, thus completing the reaction cycle. Several rounds of ATP-dependent interactions between DnaJ, DnaK and GrpE are required for fully efficient folding. The chain is Protein GrpE from Chlamydia muridarum (strain MoPn / Nigg).